Here is a 310-residue protein sequence, read N- to C-terminus: Fe-S cluster assembly protein dre2 (310 aa).

Residues 1-130 are N-terminal SAM-like domain; that stretch reads MSGRTLLLSP…KPDIEDMRAV (130 aa). The tract at residues 131–203 is linker; that stretch reads PLRLGRKKHD…EDLLDGSELA (73 aa). [2Fe-2S] cluster contacts are provided by Cys-212, Cys-223, Cys-226, and Cys-228. The interval 212-228 is fe-S binding site A; that stretch reads CRPKAGRRRRACKDCTC. [4Fe-4S] cluster is bound by residues Cys-273, Cys-276, Cys-284, and Cys-287. Short sequence motifs (cx2C motif) lie at residues 273–276 and 284–287; these read CGNC and CEGC. A fe-S binding site B region spans residues 273-287; it reads CGNCSLGDAFRCEGC.

The protein belongs to the anamorsin family. As to quaternary structure, monomer. Interacts with tah18. Interacts with mia40. The cofactor is [2Fe-2S] cluster. [4Fe-4S] cluster serves as cofactor.

The protein localises to the cytoplasm. Its subcellular location is the mitochondrion intermembrane space. Its function is as follows. Component of the cytosolic iron-sulfur (Fe-S) protein assembly (CIA) machinery required for the maturation of extramitochondrial Fe-S proteins. Part of an electron transfer chain functioning in an early step of cytosolic Fe-S biogenesis, facilitating the de novo assembly of a [4Fe-4S] cluster on the scaffold complex cfd1-nbp35. Electrons are transferred to dre2 from NADPH via the FAD- and FMN-containing protein tah18. Tah18-dre2 are also required for the assembly of the diferric tyrosyl radical cofactor of ribonucleotide reductase (RNR), probably by providing electrons for reduction during radical cofactor maturation in the catalytic small subunit rnr2. In Aspergillus clavatus (strain ATCC 1007 / CBS 513.65 / DSM 816 / NCTC 3887 / NRRL 1 / QM 1276 / 107), this protein is Fe-S cluster assembly protein dre2.